Consider the following 118-residue polypeptide: Large ribosomal subunit protein bL20 (118 aa).

It belongs to the bacterial ribosomal protein bL20 family.

In terms of biological role, binds directly to 23S ribosomal RNA and is necessary for the in vitro assembly process of the 50S ribosomal subunit. It is not involved in the protein synthesizing functions of that subunit. The chain is Large ribosomal subunit protein bL20 from Aeromonas hydrophila subsp. hydrophila (strain ATCC 7966 / DSM 30187 / BCRC 13018 / CCUG 14551 / JCM 1027 / KCTC 2358 / NCIMB 9240 / NCTC 8049).